We begin with the raw amino-acid sequence, 131 residues long: Small ribosomal subunit protein eS17 (131 aa).

This sequence belongs to the eukaryotic ribosomal protein eS17 family.

The chain is Small ribosomal subunit protein eS17 (RPS17) from Theileria annulata.